Reading from the N-terminus, the 215-residue chain is Pyrrolidone-carboxylate peptidase (215 aa).

Residues Glu80, Cys143, and His167 contribute to the active site.

This sequence belongs to the peptidase C15 family. Homotetramer.

The protein localises to the cytoplasm. It catalyses the reaction Release of an N-terminal pyroglutamyl group from a polypeptide, the second amino acid generally not being Pro.. Functionally, removes 5-oxoproline from various penultimate amino acid residues except L-proline. This is Pyrrolidone-carboxylate peptidase from Pectobacterium atrosepticum (strain SCRI 1043 / ATCC BAA-672) (Erwinia carotovora subsp. atroseptica).